The sequence spans 320 residues: L-lactate dehydrogenase (320 aa).

Residues Val-19, Asp-40, Arg-45, and 85-86 (GA) each bind NAD(+). Positions 88 and 94 each coordinate substrate. NAD(+)-binding positions include Ser-107, 124 to 126 (ITN), and Ser-149. 126-129 (NPVD) contributes to the substrate binding site. Position 154-157 (154-157 (DSAR)) interacts with substrate. The beta-D-fructose 1,6-bisphosphate site is built by Arg-159 and His-174. His-181 functions as the Proton acceptor in the catalytic mechanism. Phosphotyrosine is present on Tyr-228. Thr-237 is a binding site for substrate.

It belongs to the LDH/MDH superfamily. LDH family. In terms of assembly, homotetramer.

The protein localises to the cytoplasm. The enzyme catalyses (S)-lactate + NAD(+) = pyruvate + NADH + H(+). It functions in the pathway fermentation; pyruvate fermentation to lactate; (S)-lactate from pyruvate: step 1/1. Allosterically activated by fructose 1,6-bisphosphate (FBP). Functionally, catalyzes the conversion of lactate to pyruvate. In Bifidobacterium animalis subsp. lactis (strain AD011), this protein is L-lactate dehydrogenase.